The sequence spans 1708 residues: MAAIGRGRSLKNLRVRGRNDSGEENVPLDLTREPSDNLREILQNVARLQGVSNMRKLGHLNNFTKLLCDIGHSEEKLGFHYEDIIICLRLALLNEAKEVRAAGLRALRYLIQDSSILQKVLKLKVDYLIARCIDIQQSNEVERTQALRLVRKMITVNASLFPSSVTNSLIAVGNDGLQERDRMVRACIAIICELALQNPEVVALRGGLNTILKNVIDCQLSRINEALITTILHLLNHPKTRQYVRADVELERILAPYTDFHYRHSPDTAEGQLKEDREARFLASKMGIIATFRSWAGIINLCKPGNSGIQSLIGVLCIPNMEIRRGLLEVLYDIFRLPLPVVTEEFIEALLSVDPGRFQDSWRLSDGFVAAEAKTILPHRARSRPDLMDNYLALILSAFIRNGLLEGLVEVITNSDDHISVRATILLGELLHMANTILPHSHSHHLHCLPTLMNMAASFDIPKEKRLRASAALNCLKRFHEMKKRGPKPYSLHLDHIIQKAIATHQKRDQYLRVQKDIFILKDTEEALLINLRDSQVLQHKENLEWNWNLIGTILKWPNVNLRNYKDEQLHRFVRRLLYFYKPSSKLYANLDLDFAKAKQLTVVGCQFTEFLLESEEDGQGYLEDLVKDIVQWLNASSGMKPERSLQNNGLLTTLSQHYFLFIGTLSCHPHGVKMLEKCSVFQCLLNLCSLKNQDHLLKLTVSSLDYSRDGLARVILSKILTAATDACRLYATKHLRVLLRANVEFFNNWGIELLVTQLHDKNKTISSEALDILDEACEDKANLHALIQMKPALSHLGDKGLLLLLRFLSIPKGFSYLNERGYVAKQLEKWHREYNSKYVDLIEEQLNEALTTYRKPVDGDNYVRRSNQRLQRPHVYLPIHLYGQLVHHKTGCHLLEVQNIITELCRNVRTPDLDKWEEIKKLKASLWALGNIGSSNWGLNLLQEENVIPDILKLAKQCEVLSIRGTCVYVLGLIAKTKQGCDILKCHNWDAVRHSRKHLWPVVPDDVEQLCNELSSIPSTLSLNSESTSSRHNSESESVPSSMFILEDDRFGSSSTSTFFLDINEDTEPTFYDRSGPIKDKNSFPFFASSKLVKNRILNSLTLPNKKHRSSSDPKGGKLSSESKTSNRRIRTLTEPSVDFNHSDDFTPISTVQKTLQLETSFMGNKHIEDTGSTPSIGENDLKFTKNFGTENHRENTSRERLVVESSTSSHMKIRSQSFNTDTTTSGISSMSSSPSRETVGVDATTMDTDCGSMSTVVSTKTIKTSHYLTPQSNHLSLSKSNSVSLVPPGSSHTLPRRAQSLKAPSIATIKSLADCNFSYTSSRDAFGYATLKRLQQQRMHPSLSHSEALASPAKDVLFTDTITMKANSFESRLTPSRFMKALSYASLDKEDLLSPINQNTLQRSSSVRSMVSSATYGGSDDYIGLALPVDINDIFQVKDIPYFQTKNIPPHDDRGARAFAHDAGGLPSGTGGLVKNSFHLLRQQMSLTEIMNSIHSDASLFLESTEDTGLQEHTDDNCLYCVCIEILGFQPSNQLSAICSHSDFQDIPYSDWCEQTIHNPLEVVPSKFSGISGCSDGVSQEGSASSTKSTELLLGVKTIPDDTPMCRILLRKEVLRLVINLSSSVSTKCHETGLLTIKEKYPQTFDDICLYSEVSHLLSHCTFRLPCRRFIQELFQDVQFLQMHEEAEAVLATPPKQPIVDTSAES.

Residues 1–789 (MAAIGRGRSL…DKANLHALIQ (789 aa)) form an interaction with NBN region. A phosphoserine mark is found at Ser21, Ser35, and Ser265. Lys274 participates in a covalent cross-link: Glycyl lysine isopeptide (Lys-Gly) (interchain with G-Cter in ubiquitin). The tract at residues 521–570 (LKDTEEALLINLRDSQVLQHKENLEWNWNLIGTILKWPNVNLRNYKDEQL) is ribosome-binding domain. 3 residues coordinate ATP: Asn543, Arg572, and Arg576. The tract at residues 1022–1041 (LSLNSESTSSRHNSESESVP) is disordered. N6-acetyllysine is present on residues Lys1092 and Lys1095. Residue Thr1103 is modified to Phosphothreonine. The tract at residues 1103–1134 (TLPNKKHRSSSDPKGGKLSSESKTSNRRIRTL) is disordered. 3 positions are modified to N6-acetyllysine: Lys1116, Lys1119, and Lys1125. Thr1135 bears the Phosphothreonine; by RPS6KB1 mark. A phosphoserine mark is found at Ser1138, Ser1162, and Ser1219. Positions 1204-1252 (VVESSTSSHMKIRSQSFNTDTTTSGISSMSSSPSRETVGVDATTMDTDC) are disordered. A compositionally biased stretch (polar residues) spans 1206-1221 (ESSTSSHMKIRSQSFN). Low complexity predominate over residues 1222-1240 (TDTTTSGISSMSSSPSRET). Ser1235 is modified (phosphoserine; by GSK3-beta). At Thr1271 the chain carries Phosphothreonine. 4 positions are modified to phosphoserine: Ser1274, Ser1278, Ser1282, and Ser1284. The span at 1275–1288 (NHLSLSKSNSVSLV) shows a compositional bias: low complexity. Residues 1275–1298 (NHLSLSKSNSVSLVPPGSSHTLPR) are disordered. Thr1295 carries the post-translational modification Phosphothreonine. Phosphoserine occurs at positions 1302 and 1313. Thr1332 is subject to Phosphothreonine. Residues Ser1346 and Ser1353 each carry the phosphoserine modification. Thr1376 is modified (phosphothreonine). Phosphoserine is present on Ser1385. The residue at position 1386 (Tyr1386) is a Phosphotyrosine. 3 positions are modified to phosphoserine: Ser1388, Ser1396, and Ser1411. Positions 1515, 1520, and 1523 each coordinate Zn(2+). Ser1571, Ser1574, Ser1577, and Ser1591 each carry phosphoserine. Cys1651 serves as a coordination point for Zn(2+). Position 1695 is a phosphothreonine; by GSK3-alpha and GSK3-beta (Thr1695).

This sequence belongs to the RICTOR family. As to quaternary structure, component of the mechanistic target of rapamycin complex 2 (mTORC2), consisting in two heterotretramers composed of MTOR, MLST8, RICTOR and MAPKAP1/SIN1. The mTORC2 core complex associates with PRR5/PROTOR1 and/or PRR5L/PROTOR2. Contrary to mTORC1, mTORC2 does not bind to and is not sensitive to FKBP12-rapamycin. Binds directly to MTOR and PRR5 within the TORC2 complex; interaction with MTOR is enhanced by deubiquitination of RICTOR by USP9X. Interaction with MAPKAP1 is not enhanced by RICTOR deubiquitination by USP9X. Interacts with CCDC28B. Interacts with NBN. Interacts with SIK3. Interacts with NCKAP1L. Interacts with kinases GSK3A and GSK3B; the interactions lead to phosphorylation of RICTOR at Thr-1695 which facilitates its FBXW7-mediated ubiquitination and subsequent degradation. Interacts with FBXW7; the interaction is enhanced by GSK3-mediated phosphorylation of Thr-1695 and results in RICTOR ubiquitination and degradation. Interacts with ARMH4 (via cytoplasmic tail); this interaction bridges ARMH4 to the mTORC2 complex and inhibits the mTORC2 kinase activity. Interacts with UBXN2A. Interacts with TSPAN8. (Microbial infection) Interacts with vaccinia virus protein F17; this interaction dysregulates MTOR. In terms of processing, phosphorylated by MTOR; when part of mTORC2. Phosphorylated at Thr-1135 by RPS6KB1 downstream of the mTORC1 complex: phosphorylation of RICTOR inhibits mTORC2 signaling by creating a binding site for 14-3-3 proteins. Phosphorylated at Thr-1695 by GSK3A and GSK3B which facilitates RICTOR ubiquitination and subsequent degradation. Phosphorylated at Ser-1235 by GSK3B in response to endoplasmic stress, inhibiting mTORC2 signaling. Ubiquitinated by the SCF(FBXW7) complex, leading to its degradation by the proteasome. Deubiquitinated by USP9X; deubiquitination stabilizes RICTOR and enhances its binding to MTOR, thus promoting mTORC2 complex assembly. Post-translationally, acetylated by EP300/p300 in response to glucose, leading to activate the mTORC2 complex. Acetylation by BLOC1S1/GCN5L1 in response to hypotoxic stress protects RICTOR against ubiquitination and subsequent degradation by the proteasome.

It localises to the cell membrane. The protein localises to the endoplasmic reticulum membrane. The protein resides in the lysosome membrane. Its function is as follows. Component of the mechanistic target of rapamycin complex 2 (mTORC2), which transduces signals from growth factors to pathways involved in proliferation, cytoskeletal organization, lipogenesis and anabolic output. In response to growth factors, mTORC2 phosphorylates and activates AGC protein kinase family members, including AKT (AKT1, AKT2 and AKT3), PKC (PRKCA, PRKCB and PRKCE) and SGK1. In contrast to mTORC1, mTORC2 is nutrient-insensitive. Within the mTORC2 complex, RICTOR probably acts as a molecular adapter. RICTOR is responsible for the FKBP12-rapamycin-insensitivity of mTORC2. mTORC2 plays a critical role in AKT1 activation by mediating phosphorylation of different sites depending on the context, such as 'Thr-450', 'Ser-473', 'Ser-477' or 'Thr-479', facilitating the phosphorylation of the activation loop of AKT1 on 'Thr-308' by PDPK1/PDK1 which is a prerequisite for full activation. mTORC2 catalyzes the phosphorylation of SGK1 at 'Ser-422' and of PRKCA on 'Ser-657'. The mTORC2 complex also phosphorylates various proteins involved in insulin signaling, such as FBXW8 and IGF2BP1. mTORC2 acts upstream of Rho GTPases to regulate the actin cytoskeleton, probably by activating one or more Rho-type guanine nucleotide exchange factors. mTORC2 promotes the serum-induced formation of stress-fibers or F-actin. The chain is Rapamycin-insensitive companion of mTOR from Homo sapiens (Human).